We begin with the raw amino-acid sequence, 129 residues long: Small ribosomal subunit protein uS8 (129 aa).

The protein belongs to the universal ribosomal protein uS8 family. Part of the 30S ribosomal subunit.

Its function is as follows. One of the primary rRNA binding proteins, it binds directly to 16S rRNA central domain where it helps coordinate assembly of the platform of the 30S subunit. The polypeptide is Small ribosomal subunit protein uS8 (Thermoplasma volcanium (strain ATCC 51530 / DSM 4299 / JCM 9571 / NBRC 15438 / GSS1)).